The chain runs to 474 residues: CUGBP Elav-like family member 4 (474 aa).

Residues Met-1–Gln-287 form a sufficient for RNA-binding and MSE-dependent splicing activity region. A compositionally biased stretch (polar residues) spans Leu-18 to Gly-28. A disordered region spans residues Leu-18–Gly-41. 2 consecutive RRM domains span residues Ile-54–Ser-135 and Arg-141–Thr-221. Residues Arg-228–Phe-247 form a necessary for TNNT2 exon 5 inclusion region. An RRM 3 domain is found at Pro-392–Pro-467.

Belongs to the CELF/BRUNOL family.

It localises to the nucleus. The protein localises to the cytoplasm. Its function is as follows. RNA-binding protein implicated in the regulation of pre-mRNA alternative splicing. Mediates exon inclusion and/or exclusion in pre-mRNA that are subject to tissue-specific and developmentally regulated alternative splicing. Specifically activates exon 5 inclusion of cardiac isoforms of TNNT2 during heart remodeling at the juvenile to adult transition. Promotes exclusion of both the smooth muscle (SM) and non-muscle (NM) exons in actinin pre-mRNAs. Activates the splicing of MAPT/Tau exon 10. Binds to muscle-specific splicing enhancer (MSE) intronic sites flanking the alternative exon 5 of TNNT2 pre-mRNA. The polypeptide is CUGBP Elav-like family member 4 (CELF4) (Macaca fascicularis (Crab-eating macaque)).